A 294-amino-acid chain; its full sequence is 4-hydroxy-tetrahydrodipicolinate synthase (294 aa).

Residue Thr45 coordinates pyruvate. The Proton donor/acceptor role is filled by Tyr133. Lys161 acts as the Schiff-base intermediate with substrate in catalysis. Ile203 is a pyruvate binding site.

The protein belongs to the DapA family. Homotetramer; dimer of dimers.

The protein resides in the cytoplasm. It catalyses the reaction L-aspartate 4-semialdehyde + pyruvate = (2S,4S)-4-hydroxy-2,3,4,5-tetrahydrodipicolinate + H2O + H(+). The protein operates within amino-acid biosynthesis; L-lysine biosynthesis via DAP pathway; (S)-tetrahydrodipicolinate from L-aspartate: step 3/4. In terms of biological role, catalyzes the condensation of (S)-aspartate-beta-semialdehyde [(S)-ASA] and pyruvate to 4-hydroxy-tetrahydrodipicolinate (HTPA). The chain is 4-hydroxy-tetrahydrodipicolinate synthase from Shewanella pealeana (strain ATCC 700345 / ANG-SQ1).